A 144-amino-acid polypeptide reads, in one-letter code: RNA-binding protein 1 (144 aa).

An RRM domain is found at 11-84; that stretch reads CKVYVGNLGS…TRIRVEMSSG (74 aa). A disordered region spans residues 78 to 115; sequence RVEMSSGRSRDRRRGEGGSSGRSGSGRYRITPSARTTS.

It belongs to the splicing factor SR family. Interacts with x16 (via Arg/Ser-rich region). Extensively phosphorylated on serine residues in the RS domain. In terms of processing, the tandem heptapeptide repeats in the C-terminal domain (CTD) can be highly phosphorylated. The phosphorylation activates Pol II. Phosphorylation occurs at residues 'Ser-2', 'Ser-5' and 'Ser-7' of the heptapeptide repeat and is mediated by P-TEFb. Dephosphorylated by the INTAC complex when transcripts are unfavorably configured for transcriptional elongation, leading to premature transcription termination: dephosphorylation is mediated by the mts/PP2A component of the INTAC complex. In terms of tissue distribution, ubiquitous.

The protein localises to the nucleus. Contributes to the activation of female-specific DSX splicing in vivo by recognizing the RBP1 target sequences within the purine-rich polypyrimidine tract of the female-specific 3' splice site. This is RNA-binding protein 1 (Rbp1) from Drosophila melanogaster (Fruit fly).